A 490-amino-acid chain; its full sequence is Phenylacetaldehyde synthase (490 aa).

The L-phenylalanine site is built by Pro92, His193, and His308. An N6-(pyridoxal phosphate)lysine modification is found at Lys309. Residue Phe338 participates in L-phenylalanine binding.

This sequence belongs to the group II decarboxylase family. Homodimer. Requires pyridoxal 5'-phosphate as cofactor. As to expression, expressed in roots, rosette leaves, stems, cauline leaves and flowers.

The catalysed reaction is L-phenylalanine + O2 + H2O + H(+) = 2-phenylacetaldehyde + H2O2 + NH4(+) + CO2. The enzyme catalyses L-dopa + O2 + H2O + H(+) = 3,4-dihydroxyphenylacetaldehyde + H2O2 + NH4(+) + CO2. Functionally, bifunctional enzyme that catalyzes the decarboxylation of L-phenylalanine to 2-phenylethylamine, which is then oxidized to form 2-phenylacetaldehyde, a constituent of floral scent. 2-phenylacetaldehyde is a precursor of 2-phenylethanol, another constituent of floral scent. Catalyzes both the decarboxylation and deamination of L-dopa to 3,4-dihydroxylphenylacetaldehyde (DHPAA). The polypeptide is Phenylacetaldehyde synthase (Arabidopsis thaliana (Mouse-ear cress)).